Reading from the N-terminus, the 230-residue chain is uncharacterized protein (230 aa).

A run of 7 helical transmembrane segments spans residues 8–28 (SLILTALIGGIPSSTAVTMAF), 45–65 (SIILSWLVMFFRVIFYTFIIF), 72–92 (LVLLLLPYFALLLMFAIFLYL), 109–129 (PFSLSQAFTFGLIYSTISVIS), 141–161 (IYVLSFLSGIMDIDAITLLLA), 176–196 (MGILLAVMSNNLFKSGYAIIF), and 203–223 (IYFLFVALFTLIYTTTLLILF).

It to P.aeruginosa PA0043 and M.thermoautotrophicum MTH1451.

The protein localises to the cell membrane. This is an uncharacterized protein from Aquifex aeolicus (strain VF5).